A 210-amino-acid chain; its full sequence is Thiamine-phosphate synthase (210 aa).

Residues 38–42 and Asn-70 contribute to the 4-amino-2-methyl-5-(diphosphooxymethyl)pyrimidine site; that span reads QLREK. 2 residues coordinate Mg(2+): Asp-71 and Asp-90. Ser-109 is a binding site for 4-amino-2-methyl-5-(diphosphooxymethyl)pyrimidine. Position 139–141 (139–141) interacts with 2-[(2R,5Z)-2-carboxy-4-methylthiazol-5(2H)-ylidene]ethyl phosphate; the sequence is TPT. Lys-142 contributes to the 4-amino-2-methyl-5-(diphosphooxymethyl)pyrimidine binding site. Residues Gly-170 and 190–191 each bind 2-[(2R,5Z)-2-carboxy-4-methylthiazol-5(2H)-ylidene]ethyl phosphate; that span reads VS.

The protein belongs to the thiamine-phosphate synthase family. Mg(2+) serves as cofactor.

It carries out the reaction 2-[(2R,5Z)-2-carboxy-4-methylthiazol-5(2H)-ylidene]ethyl phosphate + 4-amino-2-methyl-5-(diphosphooxymethyl)pyrimidine + 2 H(+) = thiamine phosphate + CO2 + diphosphate. The enzyme catalyses 2-(2-carboxy-4-methylthiazol-5-yl)ethyl phosphate + 4-amino-2-methyl-5-(diphosphooxymethyl)pyrimidine + 2 H(+) = thiamine phosphate + CO2 + diphosphate. The catalysed reaction is 4-methyl-5-(2-phosphooxyethyl)-thiazole + 4-amino-2-methyl-5-(diphosphooxymethyl)pyrimidine + H(+) = thiamine phosphate + diphosphate. The protein operates within cofactor biosynthesis; thiamine diphosphate biosynthesis; thiamine phosphate from 4-amino-2-methyl-5-diphosphomethylpyrimidine and 4-methyl-5-(2-phosphoethyl)-thiazole: step 1/1. In terms of biological role, condenses 4-methyl-5-(beta-hydroxyethyl)thiazole monophosphate (THZ-P) and 2-methyl-4-amino-5-hydroxymethyl pyrimidine pyrophosphate (HMP-PP) to form thiamine monophosphate (TMP). In Leptospira biflexa serovar Patoc (strain Patoc 1 / Ames), this protein is Thiamine-phosphate synthase.